Reading from the N-terminus, the 117-residue chain is uncharacterized protein (117 aa).

This is an uncharacterized protein from Schizosaccharomyces pombe (strain 972 / ATCC 24843) (Fission yeast).